A 361-amino-acid polypeptide reads, in one-letter code: NAD(P)H-quinone oxidoreductase subunit 1, chloroplastic (361 aa).

Transmembrane regions (helical) follow at residues 28–48, 99–119, 128–148, 249–269, 270–290, 301–321, and 341–361; these read IWVL…VLVI, FTIG…VIPF, LSIG…GLLM, YSGI…LVSS, LFVT…LFVP, TIIC…ISIA, and FLLP…LLSL.

Belongs to the complex I subunit 1 family. In terms of assembly, NDH is composed of at least 16 different subunits, 5 of which are encoded in the nucleus.

Its subcellular location is the plastid. It localises to the chloroplast thylakoid membrane. The enzyme catalyses a plastoquinone + NADH + (n+1) H(+)(in) = a plastoquinol + NAD(+) + n H(+)(out). The catalysed reaction is a plastoquinone + NADPH + (n+1) H(+)(in) = a plastoquinol + NADP(+) + n H(+)(out). Its function is as follows. NDH shuttles electrons from NAD(P)H:plastoquinone, via FMN and iron-sulfur (Fe-S) centers, to quinones in the photosynthetic chain and possibly in a chloroplast respiratory chain. The immediate electron acceptor for the enzyme in this species is believed to be plastoquinone. Couples the redox reaction to proton translocation, and thus conserves the redox energy in a proton gradient. In Jasminum nudiflorum (Winter jasmine), this protein is NAD(P)H-quinone oxidoreductase subunit 1, chloroplastic.